The following is a 159-amino-acid chain: Dihydrofolate reductase (159 aa).

Positions 2–157 constitute a DHFR domain; that stretch reads TLSILVAHDL…IPHTFLHLIR (156 aa). 6 to 8 is a substrate binding site; that stretch reads LVA. Residues 7-8 and 15-20 contribute to the NADP(+) site; these read VA and IGFENQ. D28 contacts substrate. NADP(+) is bound at residue 44-47; the sequence is GRKT. R58 contacts substrate. NADP(+) is bound by residues 63 to 66 and 93 to 98; these read LTSD and FGGQIL. Position 112 (T112) interacts with substrate.

This sequence belongs to the dihydrofolate reductase family.

It catalyses the reaction (6S)-5,6,7,8-tetrahydrofolate + NADP(+) = 7,8-dihydrofolate + NADPH + H(+). The protein operates within cofactor biosynthesis; tetrahydrofolate biosynthesis; 5,6,7,8-tetrahydrofolate from 7,8-dihydrofolate: step 1/1. Functionally, key enzyme in folate metabolism. Catalyzes an essential reaction for de novo glycine and purine synthesis, and for DNA precursor synthesis. This chain is Dihydrofolate reductase (folA), found in Staphylococcus aureus (strain MW2).